We begin with the raw amino-acid sequence, 183 residues long: Peptide deformylase (183 aa).

Fe cation-binding residues include C111 and H154. Residue E155 is part of the active site. A Fe cation-binding site is contributed by H158.

The protein belongs to the polypeptide deformylase family. Fe(2+) serves as cofactor.

It carries out the reaction N-terminal N-formyl-L-methionyl-[peptide] + H2O = N-terminal L-methionyl-[peptide] + formate. In terms of biological role, removes the formyl group from the N-terminal Met of newly synthesized proteins. Requires at least a dipeptide for an efficient rate of reaction. N-terminal L-methionine is a prerequisite for activity but the enzyme has broad specificity at other positions. The polypeptide is Peptide deformylase (Staphylococcus epidermidis (strain ATCC 35984 / DSM 28319 / BCRC 17069 / CCUG 31568 / BM 3577 / RP62A)).